Consider the following 156-residue polypeptide: Cyclic pyranopterin monophosphate synthase (156 aa).

Substrate-binding positions include 75–77 (LCH) and 111–112 (ME). The active site involves aspartate 126.

It belongs to the MoaC family. In terms of assembly, homohexamer; trimer of dimers.

The enzyme catalyses (8S)-3',8-cyclo-7,8-dihydroguanosine 5'-triphosphate = cyclic pyranopterin phosphate + diphosphate. The protein operates within cofactor biosynthesis; molybdopterin biosynthesis. In terms of biological role, catalyzes the conversion of (8S)-3',8-cyclo-7,8-dihydroguanosine 5'-triphosphate to cyclic pyranopterin monophosphate (cPMP). The protein is Cyclic pyranopterin monophosphate synthase of Corynebacterium glutamicum (strain ATCC 13032 / DSM 20300 / JCM 1318 / BCRC 11384 / CCUG 27702 / LMG 3730 / NBRC 12168 / NCIMB 10025 / NRRL B-2784 / 534).